Here is a 471-residue protein sequence, read N- to C-terminus: Glutamate--tRNA ligase 1 (471 aa).

Residues 10–20 (PSPTGFLHIGG) carry the 'HIGH' region motif. The segment at 113 to 140 (ARKEGRPPRYDGRWRDRDPSEAPKDRDP) is disordered. Positions 239–243 (KLSKR) match the 'KMSKS' region motif. ATP is bound at residue lysine 242.

The protein belongs to the class-I aminoacyl-tRNA synthetase family. Glutamate--tRNA ligase type 1 subfamily. As to quaternary structure, monomer.

The protein resides in the cytoplasm. It catalyses the reaction tRNA(Glu) + L-glutamate + ATP = L-glutamyl-tRNA(Glu) + AMP + diphosphate. Its function is as follows. Catalyzes the attachment of glutamate to tRNA(Glu) in a two-step reaction: glutamate is first activated by ATP to form Glu-AMP and then transferred to the acceptor end of tRNA(Glu). The sequence is that of Glutamate--tRNA ligase 1 from Xanthobacter autotrophicus (strain ATCC BAA-1158 / Py2).